The primary structure comprises 658 residues: Biosynthetic arginine decarboxylase (658 aa).

The residue at position 127 (lysine 127) is an N6-(pyridoxal phosphate)lysine. 307 to 317 (FDVGGGLGVDY) is a binding site for substrate.

The protein belongs to the Orn/Lys/Arg decarboxylase class-II family. SpeA subfamily. Mg(2+) is required as a cofactor. Pyridoxal 5'-phosphate serves as cofactor.

The enzyme catalyses L-arginine + H(+) = agmatine + CO2. The protein operates within amine and polyamine biosynthesis; agmatine biosynthesis; agmatine from L-arginine: step 1/1. Its function is as follows. Catalyzes the biosynthesis of agmatine from arginine. The chain is Biosynthetic arginine decarboxylase from Salmonella typhi.